A 249-amino-acid polypeptide reads, in one-letter code: uncharacterized protein (249 aa).

Positions 51–67 are enriched in polar residues; sequence IPKDSLTNGKSSKNCMS. Disordered stretches follow at residues 51 to 131 and 205 to 240; these read IPKD…DSPV and YLNASLSEDDTDSIVGTDYSEEEKESISETESSSDG. A compositionally biased stretch (low complexity) spans 93–106; that stretch reads SFQSMNSSMSSSTQ. Positions 110-129 are enriched in basic and acidic residues; the sequence is RILDEKNKDQSSSNENDRDS.

It belongs to the asfivirus DP238L family.

This is an uncharacterized protein from African swine fever virus (isolate Tick/Malawi/Lil 20-1/1983) (ASFV).